Here is a 1061-residue protein sequence, read N- to C-terminus: TonB-dependent transporter Oar (1061 aa).

A signal peptide spans 1 to 26 (MHLNRVLRETGVVVAAGLLYGSAAFA). Positions 121-243 (EIVGAPPTID…TGGVINAVTR (123 aa)) constitute a TBDR plug domain. The 814-residue stretch at 248–1061 (EFHGSVFANW…QVRFGIRYTF (814 aa)) folds into the TBDR beta-barrel domain. Residues 701–722 (RSLAEPGQGTATSCDPSSFESQ) are disordered. Over residues 709–722 (GTATSCDPSSFESQ) the composition is skewed to polar residues.

Belongs to the TonB-dependent receptor family. As to quaternary structure, interacts with TonB. Part of a transport system composed of the outer membrane transporter Oar, the trans-periplasmic binding protein TonB and the inner membrane proteins ExbB and ExbD.

The protein localises to the cell outer membrane. Required for secretion of the protease PopC across the bacterial outer membrane. Binds and probably transports PopC from the periplasm to the extracellular milieu. It derives its energy for transport by interacting with the trans-periplasmic membrane protein TonB. Required for cellular adhesion during fruiting body formation, a multicellular developmental program that is induced in response to starvation. This is TonB-dependent transporter Oar from Myxococcus xanthus.